We begin with the raw amino-acid sequence, 85 residues long: Toxin AahP1005 (85 aa).

A signal peptide spans 1 to 19 (MNYLVMISLALLFMTGVES). Residues 21–83 (KDGYIVDDKN…VSTKKKGGCN (63 aa)) enclose the LCN-type CS-alpha/beta domain. Cystine bridges form between C31/C82, C35/C55, C41/C65, and C45/C67. At N83 the chain carries Asparagine amide.

It belongs to the long (4 C-C) scorpion toxin superfamily. Sodium channel inhibitor family. Alpha subfamily. Expressed by the venom gland.

The protein resides in the secreted. Alpha toxins bind voltage-independently at site-3 of sodium channels (Nav) and inhibit the inactivation of the activated channels, thereby blocking neuronal transmission. This Androctonus australis (Sahara scorpion) protein is Toxin AahP1005.